Reading from the N-terminus, the 96-residue chain is MFKALIVALAAVAAAIPTQQPSSNEMNCDSGVYCCNKVAQNTGIVVPIDALSSTCGDTLKLVTVDALNDKCTSQTVCCNNVQQNGLVNVACTPIDV.

The N-terminal stretch at 1 to 15 (MFKALIVALAAVAAA) is a signal peptide. Disulfide bonds link Cys-28–Cys-77, Cys-34–Cys-71, Cys-35–Cys-55, and Cys-78–Cys-91.

This sequence belongs to the fungal hydrophobin family.

It localises to the secreted. Its subcellular location is the cell wall. Functionally, aerial growth, conidiation, and dispersal of filamentous fungi in the environment rely upon a capability of their secreting small amphipathic proteins called hydrophobins (HPBs) with low sequence identity. Class I can self-assemble into an outermost layer of rodlet bundles on aerial cell surfaces, conferring cellular hydrophobicity that supports fungal growth, development and dispersal; whereas Class II form highly ordered films at water-air interfaces through intermolecular interactions but contribute nothing to the rodlet structure. Hyd2 plays a neglectable role in hyphal growth and asexual development and does not seem involved in cellular hydrophobicity, conidial adhesion, stress tolerance nor insect pathogenicity. The sequence is that of Class I hydrophobin 2 from Metarhizium robertsii (strain ARSEF 23 / ATCC MYA-3075) (Metarhizium anisopliae (strain ARSEF 23)).